Consider the following 370-residue polypeptide: Flagellar P-ring protein (370 aa).

The N-terminal stretch at 1 to 24 (MTLSKWILSFGLSVCLIVSHPVSA) is a signal peptide.

Belongs to the FlgI family. As to quaternary structure, the basal body constitutes a major portion of the flagellar organelle and consists of four rings (L,P,S, and M) mounted on a central rod.

The protein localises to the periplasm. Its subcellular location is the bacterial flagellum basal body. Functionally, assembles around the rod to form the L-ring and probably protects the motor/basal body from shearing forces during rotation. This is Flagellar P-ring protein from Nitrosomonas europaea (strain ATCC 19718 / CIP 103999 / KCTC 2705 / NBRC 14298).